The sequence spans 318 residues: Protein IMPACT-A (318 aa).

The RWD domain occupies D14–K116. Residues E296 to H318 are disordered. Residues V308 to H318 show a composition bias toward basic and acidic residues.

This sequence belongs to the IMPACT family. Interacts with GCN1; prevents the interaction of GCN1 with EIF2AK4/GCN2 and inhibits EIF2AK4/GCN2 kinase activity. Interaction with RPL39; this interaction occurs in a GCN1-independent manner. Associates with ribosomes; this interaction occurs in a GCN1-independent manner. Associates with actin; this interaction occurs in a GCN1-independent manner.

It localises to the cytoplasm. Translational regulator that ensures constant high levels of translation upon a variety of stress conditions, such as amino acid starvation, UV-C irradiation, proteasome inhibitor treatment and glucose deprivation. Plays a role as a negative regulator of the EIF2AK4/GCN2 kinase activity; impairs GCN1-mediated EIF2AK4/GCN2 activation, and hence EIF2AK4/GCN2-mediated eIF-2-alpha phosphorylation and subsequent down-regulation of protein synthesis. Plays a role in differentiation of neuronal cells by stimulating neurite outgrowth. The sequence is that of Protein IMPACT-A (impact-A) from Xenopus tropicalis (Western clawed frog).